We begin with the raw amino-acid sequence, 235 residues long: uncharacterized protein (235 aa).

Disordered regions lie at residues 1–36 (MGMLAPGPLQGRRPRKGHKGQEDAVAPGCKASGRGS) and 213–235 (VKTRKSKRRSGEGSHLTTSILEQ).

This is an uncharacterized protein from Homo sapiens (Human).